The following is a 476-amino-acid chain: Lactate utilization protein B (476 aa).

2 consecutive 4Fe-4S ferredoxin-type domains span residues 304 to 334 (GTEFQPVLQCIRCAACVNVCPVYRHIGGHSY) and 353 to 382 (YDDYKELPYASSLCAACTEVCPVKIPLHEL). [4Fe-4S] cluster-binding residues include Cys313, Cys316, Cys319, Cys323, Cys366, Cys369, and Cys373.

Belongs to the LutB/YkgF family.

Its function is as follows. Is involved in L-lactate degradation and allows cells to grow with lactate as the sole carbon source. Has probably a role as an electron transporter during oxidation of L-lactate. In Geobacillus thermodenitrificans (strain NG80-2), this protein is Lactate utilization protein B.